The sequence spans 634 residues: Chaperone protein DnaK (634 aa).

Thr197 is modified (phosphothreonine; by autocatalysis). Positions 592 to 634 (IGSSVYQQPGNQPPAPGGPNANASDDKGPDDDVIDADFTETKD) are disordered. Residues 619–634 (GPDDDVIDADFTETKD) show a composition bias toward acidic residues.

This sequence belongs to the heat shock protein 70 family.

Its function is as follows. Acts as a chaperone. This is Chaperone protein DnaK from Prochlorococcus marinus (strain MIT 9515).